The primary structure comprises 364 residues: Methylthioribose-1-phosphate isomerase (364 aa).

Substrate is bound by residues 53 to 55 (RGA), arginine 90, and glutamine 200. Aspartate 241 functions as the Proton donor in the catalytic mechanism. 251–252 (NK) serves as a coordination point for substrate.

It belongs to the eIF-2B alpha/beta/delta subunits family. MtnA subfamily.

It carries out the reaction 5-(methylsulfanyl)-alpha-D-ribose 1-phosphate = 5-(methylsulfanyl)-D-ribulose 1-phosphate. It functions in the pathway amino-acid biosynthesis; L-methionine biosynthesis via salvage pathway; L-methionine from S-methyl-5-thio-alpha-D-ribose 1-phosphate: step 1/6. In terms of biological role, catalyzes the interconversion of methylthioribose-1-phosphate (MTR-1-P) into methylthioribulose-1-phosphate (MTRu-1-P). This Methylobacterium nodulans (strain LMG 21967 / CNCM I-2342 / ORS 2060) protein is Methylthioribose-1-phosphate isomerase.